A 245-amino-acid polypeptide reads, in one-letter code: Fibroblast growth factor 3 (245 aa).

A signal peptide spans 1–17 (MGLIWLLLLSLLEPSWP). Asn-65 is a glycosylation site (N-linked (GlcNAc...) asparagine). Disordered stretches follow at residues 137-181 (GSSG…FLPR) and 195-245 (QSSQ…LAVA). Residues 161–173 (GRPRRGFKTRRTQ) are compositionally biased toward basic residues. Residues 226-238 (TLSTRATPSTQLH) are compositionally biased toward polar residues.

It belongs to the heparin-binding growth factors family. Interacts with FGFR1 and FGFR2. Affinity between fibroblast growth factors (FGFs) and their receptors is increased by heparan sulfate glycosaminoglycans that function as coreceptors. Post-translationally, glycosylated.

Its subcellular location is the nucleus. It is found in the endoplasmic reticulum. The protein resides in the golgi apparatus. Plays an important role in the regulation of embryonic development, cell proliferation, and cell differentiation. Required for normal ear development. In Mus musculus (Mouse), this protein is Fibroblast growth factor 3 (Fgf3).